The chain runs to 215 residues: MSKVYDWFEERLEIQAIADDITSKYVPPHVNIFYCLGGITLTCFLVQVATGFAMTFYYRPTVTEAFASVQYIMTEANFGWLIRSVHRWSASMMVLMMILHVFRVYLTGGFKKPRELTWVTGVILAVLTASFGVTGYSLPRDQIGYWAVKIVTGVPEAIPVIGSPLVELLRGSASVGQSTLTRFYSLHTFVLPLLTAVFMLMHFPMIRKQGISGPL.

Residues 32–52 (IFYCLGGITLTCFLVQVATGF) form a helical membrane-spanning segment. Position 35 (Cys-35) interacts with heme c. Heme b contacts are provided by His-86 and His-100. A run of 3 helical transmembrane segments spans residues 90–110 (ASMMVLMMILHVFRVYLTGGF), 116–136 (LTWVTGVILAVLTASFGVTGY), and 186–206 (LHTFVLPLLTAVFMLMHFPMI). Heme b-binding residues include His-187 and His-202.

It belongs to the cytochrome b family. PetB subfamily. The 4 large subunits of the cytochrome b6-f complex are cytochrome b6, subunit IV (17 kDa polypeptide, PetD), cytochrome f and the Rieske protein, while the 4 small subunits are PetG, PetL, PetM and PetN. The complex functions as a dimer. It depends on heme b as a cofactor. Heme c serves as cofactor.

Its subcellular location is the plastid. It is found in the chloroplast thylakoid membrane. Component of the cytochrome b6-f complex, which mediates electron transfer between photosystem II (PSII) and photosystem I (PSI), cyclic electron flow around PSI, and state transitions. This Liriodendron tulipifera (Tuliptree) protein is Cytochrome b6.